A 197-amino-acid chain; its full sequence is Nucleoid occlusion factor SlmA (197 aa).

Residues 7–67 (INRREHILQC…GLIEFIEESL (61 aa)) enclose the HTH tetR-type domain. Positions 30-49 (TTAKLASEVGVSEAALYRHF) form a DNA-binding region, H-T-H motif.

It belongs to the nucleoid occlusion factor SlmA family. As to quaternary structure, homodimer. Interacts with FtsZ.

The protein localises to the cytoplasm. It is found in the nucleoid. Functionally, required for nucleoid occlusion (NO) phenomenon, which prevents Z-ring formation and cell division over the nucleoid. Acts as a DNA-associated cell division inhibitor that binds simultaneously chromosomal DNA and FtsZ, and disrupts the assembly of FtsZ polymers. SlmA-DNA-binding sequences (SBS) are dispersed on non-Ter regions of the chromosome, preventing FtsZ polymerization at these regions. In Shewanella sp. (strain MR-7), this protein is Nucleoid occlusion factor SlmA.